Consider the following 110-residue polypeptide: uncharacterized protein (110 aa).

An N-terminal signal peptide occupies residues 1 to 16 (MKKILLIASMTAGLTA). Residue Cys17 is the site of N-palmitoyl cysteine attachment. A lipid anchor (S-diacylglycerol cysteine) is attached at Cys17.

It localises to the cell membrane. This is an uncharacterized protein from Salmonella typhimurium (strain LT2 / SGSC1412 / ATCC 700720).